The following is a 175-amino-acid chain: Transcriptional repressor NrdR (175 aa).

A zinc finger lies at 3–32; the sequence is CPYCSHPDSKVIDSRDVDDGVRRRRECVVC. In terms of domain architecture, ATP-cone spans 47–137; that stretch reads LFVVKKDQRR…VYREFTDITQ (91 aa).

It belongs to the NrdR family. It depends on Zn(2+) as a cofactor.

Its function is as follows. Negatively regulates transcription of bacterial ribonucleotide reductase nrd genes and operons by binding to NrdR-boxes. The sequence is that of Transcriptional repressor NrdR from Dehalococcoides mccartyi (strain ATCC BAA-2100 / JCM 16839 / KCTC 5957 / BAV1).